The chain runs to 380 residues: Erythronate-4-phosphate dehydrogenase (380 aa).

Substrate contacts are provided by Ser45 and Thr66. Asp146 contributes to the NAD(+) binding site. The active site involves Arg207. Residue Asp232 participates in NAD(+) binding. The active site involves Glu237. The active-site Proton donor is the His254. Gly257 is a binding site for NAD(+). Tyr258 is a substrate binding site.

Belongs to the D-isomer specific 2-hydroxyacid dehydrogenase family. PdxB subfamily. As to quaternary structure, homodimer.

It localises to the cytoplasm. It catalyses the reaction 4-phospho-D-erythronate + NAD(+) = (R)-3-hydroxy-2-oxo-4-phosphooxybutanoate + NADH + H(+). The protein operates within cofactor biosynthesis; pyridoxine 5'-phosphate biosynthesis; pyridoxine 5'-phosphate from D-erythrose 4-phosphate: step 2/5. Its function is as follows. Catalyzes the oxidation of erythronate-4-phosphate to 3-hydroxy-2-oxo-4-phosphonooxybutanoate. This Marinomonas sp. (strain MWYL1) protein is Erythronate-4-phosphate dehydrogenase.